Consider the following 162-residue polypeptide: MDEAYYSGNLESVLGYVSDMHTELASISQLVIAKIETIDNDILNKDIVNFIMCRSNLDNPFISFLDTVYTIIDQENYQTELINSLDDNEIIDCIVNKFMSFYKDNLENIVDAIITLKYIMNNPDFKTTYAEVLGSRIADIDIKQVIRENILQLSNDIRERYL.

Belongs to the poxviridae A49 protein family. In terms of assembly, interacts with host BTRC; this interaction inhibits NF-kappa-B activation.

It is found in the host cytoplasm. The protein resides in the host nucleus. Plays a role in the inhibition of host NF-kappa-B activation. Interacts with host BTRC and thereby diminishes ubiquitination of NF-kappa-B inhibitor alpha/NFKBIA. This stabilizes NFKBIA and its interaction with NF-kappaB, so retaining p65/RELA in the cytoplasm and preventing NF-kappa-B-dependent gene expression. The protein is Protein A49R of Bos taurus (Bovine).